A 256-amino-acid chain; its full sequence is Transmembrane protein 74B (256 aa).

A disordered region spans residues 1 to 111 (MPPAQGYEFA…LSLHSEEGPA (111 aa)). Over residues 80–96 (RLGSSPSPPGGVSSLPR) the composition is skewed to low complexity. Residues 97–108 (SQRDDLSLHSEE) are compositionally biased toward basic and acidic residues. The next 2 helical transmembrane spans lie at 123–143 (FVSA…AYAI) and 177–197 (IIAG…LLMV).

It belongs to the TMEM74 family.

It localises to the membrane. The sequence is that of Transmembrane protein 74B (TMEM74B) from Homo sapiens (Human).